Reading from the N-terminus, the 145-residue chain is Basic phospholipase A2 textilotoxin A chain (145 aa).

An N-terminal signal peptide occupies residues 1–19 (MHPAHLLVLLGVCVSLLGA). Positions 20–27 (SDIPPLPL) are excised as a propeptide. 7 cysteine pairs are disulfide-bonded: cysteine 38–cysteine 98, cysteine 54–cysteine 144, cysteine 56–cysteine 72, cysteine 71–cysteine 125, cysteine 78–cysteine 118, cysteine 87–cysteine 111, and cysteine 105–cysteine 116. Positions 55, 57, and 59 each coordinate Ca(2+). Histidine 75 is a catalytic residue. Aspartate 76 contributes to the Ca(2+) binding site. Residue aspartate 119 is part of the active site.

Belongs to the phospholipase A2 family. Group I subfamily. D49 sub-subfamily. In terms of assembly, heterohexamer. 2 forms exist: 2 A or 2 B chains, 2 C chains and 2 covalently-linked D chains, and 1 A or 1 B, 1 C, 2 covalently-linked D chains and 2 differentially glycosylated covalently-linked D chains. Textilotoxin was originally described as pentameric. The cofactor is Ca(2+). Expressed by the venom gland.

Its subcellular location is the secreted. The catalysed reaction is a 1,2-diacyl-sn-glycero-3-phosphocholine + H2O = a 1-acyl-sn-glycero-3-phosphocholine + a fatty acid + H(+). Snake venom oligomeric phospholipase A2 that has potent presynaptic neurotoxicity. Chain A possesses a very low toxicity, but is essential for neurotoxicity. Possesses a low enzymatic activity. PLA2 catalyzes the calcium-dependent hydrolysis of the 2-acyl groups in 3-sn-phosphoglycerides. The protein is Basic phospholipase A2 textilotoxin A chain of Pseudonaja textilis (Eastern brown snake).